We begin with the raw amino-acid sequence, 817 residues long: Leucine--tRNA ligase (817 aa).

Positions 51 to 61 (PYPSGDLHVGH) match the 'HIGH' region motif. The 'KMSKS' region motif lies at 588–592 (RMSKS). An ATP-binding site is contributed by Lys-591.

This sequence belongs to the class-I aminoacyl-tRNA synthetase family.

The protein localises to the cytoplasm. The catalysed reaction is tRNA(Leu) + L-leucine + ATP = L-leucyl-tRNA(Leu) + AMP + diphosphate. The polypeptide is Leucine--tRNA ligase (Rubrobacter xylanophilus (strain DSM 9941 / JCM 11954 / NBRC 16129 / PRD-1)).